The sequence spans 115 residues: Large ribosomal subunit protein bL19 (115 aa).

The protein belongs to the bacterial ribosomal protein bL19 family.

This protein is located at the 30S-50S ribosomal subunit interface and may play a role in the structure and function of the aminoacyl-tRNA binding site. In Francisella tularensis subsp. mediasiatica (strain FSC147), this protein is Large ribosomal subunit protein bL19.